A 569-amino-acid chain; its full sequence is 4-hydroxy-7-methoxy-3-oxo-3,4-dihydro-2H-1,4-benzoxazin-2-yl glucoside beta-D-glucosidase 1a, chloroplastic (569 aa).

Residues 1 to 50 (MALLAAATLNPTTHLSLRSRAGRNSENLWLRSAASSQKSKGRFCNLTIRA) constitute a chloroplast transit peptide. Residues Q92, H194, and 239–240 (NE) each bind a beta-D-glucoside. The active-site Proton donor is the E240. C259 and C265 form a disulfide bridge. Residues Y383, E456, W504, 511–512 (EW), and F520 contribute to the a beta-D-glucoside site. E456 serves as the catalytic Nucleophile.

The protein belongs to the glycosyl hydrolase 1 family. Homo- and heterohexamers. In terms of tissue distribution, expressed in young seedlings early after germination.

The protein resides in the plastid. The protein localises to the chloroplast. The catalysed reaction is Hydrolysis of terminal, non-reducing beta-D-glucosyl residues with release of beta-D-glucose.. It carries out the reaction DIMBOA beta-D-glucoside + H2O = DIMBOA + D-glucose. The enzyme catalyses DIBOA beta-D-glucoside + H2O = DIBOA + D-glucose. Acts in defense of young plant parts against pests via the production of hydroxamic acids from hydroxamic acid glucosides. Enzymatic activity is highly correlated with plant growth. The preferred substrate is DIMBOA-beta-D-glucoside. The sequence is that of 4-hydroxy-7-methoxy-3-oxo-3,4-dihydro-2H-1,4-benzoxazin-2-yl glucoside beta-D-glucosidase 1a, chloroplastic (GLU1A) from Triticum aestivum (Wheat).